Here is a 750-residue protein sequence, read N- to C-terminus: Methylmalonyl-CoA mutase, mitochondrial (750 aa).

The transit peptide at 1-32 (MLRAKNQLFLLSPHYLRQVKESSGSRLIQQRL) directs the protein to the mitochondrion. Q50 contributes to the malonyl-CoA binding site. K89 is modified (N6-acetyllysine). Malonyl-CoA-binding positions include 96–99 (YPTM) and 106–110 (TIRQY). K212 bears the N6-acetyllysine mark. Residues 216 to 218 (TIQ), R228, K255, H265, and 304 to 306 (RLS) each bind malonyl-CoA. K335 carries the N6-acetyllysine modification. K343 carries the N6-succinyllysine modification. Position 481 is a phosphoserine (S481). K595 bears the N6-succinyllysine mark. K602 is modified (N6-acetyllysine). One can recognise a B12-binding domain in the interval 614–746 (RPRLLVAKMG…DDIEKCLEKK (133 aa)). H627 contributes to the adenosylcob(III)alamin binding site.

It belongs to the methylmalonyl-CoA mutase family. Homodimer. Interacts (the apoenzyme form) with MMAA; the interaction is GTP dependent. Adenosylcob(III)alamin serves as cofactor.

The protein resides in the mitochondrion matrix. Its subcellular location is the mitochondrion. It localises to the cytoplasm. The catalysed reaction is (R)-methylmalonyl-CoA = succinyl-CoA. With respect to regulation, inhibited by itaconyl-CoA, a metabolite that inactivates the coenzyme B12 cofactor. Functionally, catalyzes the reversible isomerization of methylmalonyl-CoA (MMCoA) (generated from branched-chain amino acid metabolism and degradation of dietary odd chain fatty acids and cholesterol) to succinyl-CoA (3-carboxypropionyl-CoA), a key intermediate of the tricarboxylic acid cycle. This Bos taurus (Bovine) protein is Methylmalonyl-CoA mutase, mitochondrial (MMUT).